The sequence spans 93 residues: Small ribosomal subunit protein uS19 (93 aa).

This sequence belongs to the universal ribosomal protein uS19 family.

Its function is as follows. Protein S19 forms a complex with S13 that binds strongly to the 16S ribosomal RNA. This Frankia casuarinae (strain DSM 45818 / CECT 9043 / HFP020203 / CcI3) protein is Small ribosomal subunit protein uS19.